The primary structure comprises 137 residues: Small ribosomal subunit protein uS12 (137 aa).

2 disordered regions span residues 1 to 21 (MPTI…KSKS) and 33 to 57 (KVQT…TPRK). Asp102 bears the 3-methylthioaspartic acid mark.

It belongs to the universal ribosomal protein uS12 family. In terms of assembly, part of the 30S ribosomal subunit. Contacts proteins S8 and S17. May interact with IF1 in the 30S initiation complex.

With S4 and S5 plays an important role in translational accuracy. Its function is as follows. Interacts with and stabilizes bases of the 16S rRNA that are involved in tRNA selection in the A site and with the mRNA backbone. Located at the interface of the 30S and 50S subunits, it traverses the body of the 30S subunit contacting proteins on the other side and probably holding the rRNA structure together. The combined cluster of proteins S8, S12 and S17 appears to hold together the shoulder and platform of the 30S subunit. This chain is Small ribosomal subunit protein uS12, found in Streptococcus pneumoniae (strain ATCC 700669 / Spain 23F-1).